A 293-amino-acid chain; its full sequence is AM-toxin biosynthesis protein 14 (293 aa).

5 helical membrane-spanning segments follow: residues 33–53 (SATA…EVYI), 73–93 (IAVN…ALVL), 148–168 (GVLA…LCVW), 183–203 (LVPI…LWIL), and 221–241 (VWCL…TPLT).

It is found in the membrane. It participates in mycotoxin biosynthesis. Functionally, part of the gene clusters that mediate the biosynthesis of AM-toxins, host-selective toxins (HSTs) causing Alternaria blotch on apple, a worldwide distributed disease. AM-toxins are cyclic depsipeptides containing the 3 residues 2-hydroxy-isovaleric acid (2-HIV), dehydroalanine, L-alanine which are common for all 3 AM-toxins I to III. The fourth precursor is L-alpha-amino-methoxyphenyl-valeric acid (L-Amv) for AM-toxin I, L-alpha-amino-phenyl-valeric acid (L-Apv) for AM-toxin II, and L-alpha-amino-hydroxyphenyl-valeric acid (L-Ahv) for AM-toxin III. AM-toxins have two target sites for affecting susceptible apple cells; they cause invagination of the plasma membrane and electrolyte loss and chloroplast disorganization. The non-ribosomal peptide synthetase AMT1 contains 4 catalytic modules and is responsible for activation of each residue in AM-toxin. The aldo-keto reductase AMT2 catalyzes the conversion of 2-keto-isovaleric acid (2-KIV) to 2-hydroxy-isovaleric acid (2-HIV), one of the precursor residues incorporated by AMT1 during AM-toxin biosynthesis, by reduction of its ketone to an alcohol. The cytochrome P450 monooxygenase AMT3 and the thioesterase AMT4 are also important for AM-toxin production, but their exact function within the AM-toxin biosynthesis are not known yet. Up to 21 proteins (including AMT1 to AMT4) are predicted to be involved in AM-toxin biosynthesis since their expression ishighly up-regulated in AM-toxin-producing cultures. The chain is AM-toxin biosynthesis protein 14 from Alternaria alternata (Alternaria rot fungus).